Reading from the N-terminus, the 392-residue chain is Formate-dependent phosphoribosylglycinamide formyltransferase (392 aa).

N(1)-(5-phospho-beta-D-ribosyl)glycinamide is bound by residues 22–23 (EL) and Glu82. ATP contacts are provided by residues Arg114, Lys155, 160 to 165 (SSGKGQ), 195 to 198 (EGLV), and Glu203. An ATP-grasp domain is found at 119–308 (RLAAETLGVP…EFALHVRAFL (190 aa)). Mg(2+) contacts are provided by Glu267 and Glu279. Residues Asp286, Lys355, and 362–363 (RR) contribute to the N(1)-(5-phospho-beta-D-ribosyl)glycinamide site.

It belongs to the PurK/PurT family. As to quaternary structure, homodimer.

The catalysed reaction is N(1)-(5-phospho-beta-D-ribosyl)glycinamide + formate + ATP = N(2)-formyl-N(1)-(5-phospho-beta-D-ribosyl)glycinamide + ADP + phosphate + H(+). The protein operates within purine metabolism; IMP biosynthesis via de novo pathway; N(2)-formyl-N(1)-(5-phospho-D-ribosyl)glycinamide from N(1)-(5-phospho-D-ribosyl)glycinamide (formate route): step 1/1. Involved in the de novo purine biosynthesis. Catalyzes the transfer of formate to 5-phospho-ribosyl-glycinamide (GAR), producing 5-phospho-ribosyl-N-formylglycinamide (FGAR). Formate is provided by PurU via hydrolysis of 10-formyl-tetrahydrofolate. The chain is Formate-dependent phosphoribosylglycinamide formyltransferase from Pectobacterium carotovorum subsp. carotovorum (strain PC1).